The sequence spans 121 residues: Large ribosomal subunit protein bL12 (121 aa).

This sequence belongs to the bacterial ribosomal protein bL12 family. Homodimer. Part of the ribosomal stalk of the 50S ribosomal subunit. Forms a multimeric L10(L12)X complex, where L10 forms an elongated spine to which 2 to 4 L12 dimers bind in a sequential fashion. Binds GTP-bound translation factors.

Functionally, forms part of the ribosomal stalk which helps the ribosome interact with GTP-bound translation factors. Is thus essential for accurate translation. This is Large ribosomal subunit protein bL12 from Pectobacterium carotovorum subsp. carotovorum (strain PC1).